A 202-amino-acid polypeptide reads, in one-letter code: Alpha-S1-casein (202 aa).

Disordered stretches follow at residues 1 to 25 (RPKL…VLKE) and 51 to 84 (LKEK…VVPI). 2 stretches are compositionally biased toward basic and acidic residues: residues 16 to 25 (QDSREKVLKE) and 51 to 63 (LKEK…KEYL). Ser-18 is modified (phosphoserine). Residues 70-80 (QESSSTSSSEE) are compositionally biased toward low complexity. A phosphoserine mark is found at Ser-72, Ser-73, Ser-74, Ser-76, Ser-77, and Ser-78.

Belongs to the alpha-casein family. Mammary gland specific. Secreted in milk.

The protein resides in the secreted. In terms of biological role, important role in the capacity of milk to transport calcium phosphate. In Equus asinus (Donkey), this protein is Alpha-S1-casein.